Here is a 345-residue protein sequence, read N- to C-terminus: Beta-2-glycoprotein 1 (345 aa).

The first 19 residues, 1–19 (MISPVLILFSSFLCHVAIA), serve as a signal peptide directing secretion. 4 consecutive Sushi domains span residues 21–81 (RTCP…KCTP), 82–139 (RVCP…VCAP), 140–202 (IICP…ECRE), and 203–262 (VKCP…SCKA). Intrachain disulfides connect Cys-23/Cys-66, Cys-51/Cys-79, Cys-84/Cys-124, Cys-110/Cys-137, Cys-142/Cys-188, Cys-174/Cys-200, Cys-205/Cys-248, Cys-234/Cys-260, Cys-264/Cys-315, Cys-300/Cys-325, and Cys-307/Cys-345. O-linked (GalNAc...) threonine glycosylation occurs at Thr-33. Thr-149 carries O-linked (GalNAc...) threonine glycosylation. An N-linked (GlcNAc...) (complex) asparagine glycan is attached at Asn-162. N-linked (GlcNAc...) asparagine glycosylation is found at Asn-183 and Asn-193. Residue Asn-253 is glycosylated (N-linked (GlcNAc...) asparagine). A sushi-like region spans residues 263–345 (SCKVPVKKAT…KTDASDVKPC (83 aa)).

N- and O-glycosylated. PubMed:6587378 also reports glycosylation on 'Asn-188' for their allele. Expressed by the liver and secreted in plasma.

The protein localises to the secreted. Binds to various kinds of negatively charged substances such as heparin, phospholipids, and dextran sulfate. May prevent activation of the intrinsic blood coagulation cascade by binding to phospholipids on the surface of damaged cells. This chain is Beta-2-glycoprotein 1 (APOH), found in Homo sapiens (Human).